The sequence spans 340 residues: CRISPR-associated protein Cas7 (340 aa).

Component of the Cascade-like complex (Cascade I-B), composed of Cas5, Cas6, Cas7 and crRNA.

It is found in the cytoplasm. Functionally, CRISPR (clustered regularly interspaced short palindromic repeat) is an adaptive immune system that provides protection against mobile genetic elements (viruses, transposable elements and conjugative plasmids). CRISPR clusters contain sequences complementary to antecedent mobile elements and target invading nucleic acids. CRISPR clusters are transcribed and processed into CRISPR RNA (crRNA). Plasmid targeted by CRISPR locus P1 transform wild-type cells very poorly. This protein helps process or stabilize pre-crRNA into individual crRNA units, in vivo Cas6 and Cas7 are also required for optimal crRNA processing and/or stability. This Haloferax volcanii (strain ATCC 29605 / DSM 3757 / JCM 8879 / NBRC 14742 / NCIMB 2012 / VKM B-1768 / DS2) (Halobacterium volcanii) protein is CRISPR-associated protein Cas7.